The sequence spans 101 residues: NADH-quinone oxidoreductase subunit K (101 aa).

3 consecutive transmembrane segments (helical) span residues 4 to 24 (LAHF…GIFL), 30 to 50 (IVLL…FVAF), and 61 to 81 (VFVF…LAIL).

It belongs to the complex I subunit 4L family. In terms of assembly, NDH-1 is composed of 14 different subunits. Subunits NuoA, H, J, K, L, M, N constitute the membrane sector of the complex.

It localises to the cell inner membrane. It catalyses the reaction a quinone + NADH + 5 H(+)(in) = a quinol + NAD(+) + 4 H(+)(out). Its function is as follows. NDH-1 shuttles electrons from NADH, via FMN and iron-sulfur (Fe-S) centers, to quinones in the respiratory chain. The immediate electron acceptor for the enzyme in this species is believed to be ubiquinone. Couples the redox reaction to proton translocation (for every two electrons transferred, four hydrogen ions are translocated across the cytoplasmic membrane), and thus conserves the redox energy in a proton gradient. In Cupriavidus necator (strain ATCC 17699 / DSM 428 / KCTC 22496 / NCIMB 10442 / H16 / Stanier 337) (Ralstonia eutropha), this protein is NADH-quinone oxidoreductase subunit K.